The sequence spans 213 residues: Ras-like protein rasX (213 aa).

Residue 16-23 (GDGGVGKT) participates in GTP binding. The Effector region signature appears at 38–46 (YDPTIEDSY). Residues 63 to 67 (DTAGQ) and 122 to 125 (NKSD) each bind GTP. Cys-210 carries the post-translational modification Cysteine methyl ester. The S-geranylgeranyl cysteine moiety is linked to residue Cys-210. The propeptide at 211–213 (KMM) is removed in mature form.

The protein belongs to the small GTPase superfamily. Ras family.

Its subcellular location is the cell membrane. It catalyses the reaction GTP + H2O = GDP + phosphate + H(+). Its function is as follows. Ras proteins bind GDP/GTP and possess intrinsic GTPase activity. The chain is Ras-like protein rasX (rasX) from Dictyostelium discoideum (Social amoeba).